The sequence spans 377 residues: Hsc70-interacting protein 2 (377 aa).

The disordered stretch occupies residues 68–123 (AKANEPANAPEDSEDEKSLSDPESDVELDMEGVIEADSDPAQPMGNYSKKATEEEV). Ser-80 carries the phosphoserine modification. Residues 89-105 (PESDVELDMEGVIEADS) are compositionally biased toward acidic residues. 3 TPR repeats span residues 126–159 (ASEL…SPGN), 161–193 (LFHA…NSDL), and 195–227 (AGYK…DFDE). Residues 239-276 (NAKKIEQHRLKQERRQAERKIKERQRDQRRARKEQEKH) are a coiled coil. Basic and acidic residues predominate over residues 243–277 (IEQHRLKQERRQAERKIKERQRDQRRARKEQEKHN). Disordered regions lie at residues 243–302 (IEQH…DILG) and 344–377 (DVGA…DGLD). Positions 282-293 (GSSGEFSGGNPG) are enriched in gly residues. The STI1 domain maps to 294–336 (NGNMSDILGAMSDPEVSAAIQDILSNPGNITKYASNPKIYNLI). Residues 355 to 369 (KAGKPSEPKPKKDSA) are compositionally biased toward basic and acidic residues.

This sequence belongs to the FAM10 family. In terms of assembly, homotetramer. Interacts with Hsc70 as well as DNAJ homologs and Hsp90.

It is found in the cytoplasm. One HIP oligomer binds the ATPase domains of at least two Hsc70 molecules dependent on activation of the Hsc70 ATPase by Hsp40. Stabilizes the ADP state of Hsc70 that has a high affinity for substrate protein. Through its own chaperone activity, it may contribute to the interaction of Hsc70 with various target proteins. The protein is Hsc70-interacting protein 2 of Drosophila melanogaster (Fruit fly).